A 501-amino-acid chain; its full sequence is Dynein regulatory complex subunit 5 (501 aa).

Residues 1–23 (MQDTVTTSALLDPSHSSVSTQDN) are compositionally biased toward polar residues. Disordered stretches follow at residues 1-56 (MQDT…HPRA) and 202-222 (LPAQ…EMEE). A compositionally biased stretch (low complexity) spans 24–34 (SSTGGHTSSTS). LRR repeat units follow at residues 308-321 (VLEE…LIGD), 335-355 (RLRV…QSLA), 363-383 (NLIS…QALA), 391-411 (CLTT…TLLS), and 419-439 (TLTS…KQLL).

This sequence belongs to the DRC5 family. As to quaternary structure, component of the nexin-dynein regulatory complex (N-DRC). Interacts with DRC1. Interacts with FBXL13/DRC6, DRC3 and DRC7.

The protein localises to the cell projection. The protein resides in the cilium. It localises to the flagellum. It is found in the cytoplasm. Its subcellular location is the cytoskeleton. The protein localises to the flagellum axoneme. In terms of biological role, component of the nexin-dynein regulatory complex (N-DRC) a key regulator of ciliary/flagellar motility which maintains the alignment and integrity of the distal axoneme and regulates microtubule sliding in motile axonemes. May play a role in the assembly of N-DRC. May be required for sperm motility. In Homo sapiens (Human), this protein is Dynein regulatory complex subunit 5 (TCTE1).